The primary structure comprises 168 residues: Phosphopantetheine adenylyltransferase (168 aa).

Residue T14 participates in substrate binding. ATP contacts are provided by residues 14 to 15 and H22; that span reads TF. Positions 46, 78, and 92 each coordinate substrate. Residues 93–95, E103, and 128–134 contribute to the ATP site; these read GLR and YSFISSS.

The protein belongs to the bacterial CoaD family. Homohexamer. Mg(2+) is required as a cofactor.

It localises to the cytoplasm. It carries out the reaction (R)-4'-phosphopantetheine + ATP + H(+) = 3'-dephospho-CoA + diphosphate. It participates in cofactor biosynthesis; coenzyme A biosynthesis; CoA from (R)-pantothenate: step 4/5. Functionally, reversibly transfers an adenylyl group from ATP to 4'-phosphopantetheine, yielding dephospho-CoA (dPCoA) and pyrophosphate. This chain is Phosphopantetheine adenylyltransferase, found in Xanthomonas axonopodis pv. citri (strain 306).